The sequence spans 160 residues: Major strawberry allergen Fra a 1-2 (160 aa).

This sequence belongs to the BetVI family. In terms of assembly, monomer. Interacts with AP. In terms of tissue distribution, highly expressed in ripe red fruits. Expressed in roots and white fruits. Expressed at low levels in open flowers.

In terms of biological role, involved in the control of flavonoid biosynthesis in fruits, probably by binding directly to natural flavonoids. Binds the natural flavonoid myricetin with affinities in the low micromolar range. This Fragaria ananassa (Strawberry) protein is Major strawberry allergen Fra a 1-2.